Consider the following 132-residue polypeptide: Histone H2A.1 (132 aa).

The disordered stretch occupies residues 1 to 21 (MSGGKGKAGTSEKASTSRSAK). Position 2 is an N-acetylserine (serine 2). N6-acetyllysine is present on residues lysine 5 and lysine 7. Glutamine 105 carries the N5-methylglutamine modification. Serine 129 bears the Phosphoserine mark. The [ST]-Q motif motif lies at 129-130 (SQ).

This sequence belongs to the histone H2A family. In terms of assembly, the nucleosome is a histone octamer containing two molecules each of H2A, H2B, H3 and H4 assembled in one H3-H4 heterotetramer and two H2A-H2B heterodimers. The octamer wraps approximately 147 bp of DNA. Post-translationally, phosphorylated to form H2AS128ph (gamma-H2A) in response to DNA double-strand breaks (DSBs) generated by exogenous genotoxic agents and by stalled replication forks. Phosphorylation is dependent on the DNA damage checkpoint kinases MEC1/ATR and TEL1/ATM, spreads on either side of a detected DSB site and may mark the surrounding chromatin for recruitment of proteins required for DNA damage signaling and repair. Gamma-H2A is removed from the DNA prior to the strand invasion-primer extension step of the repair process and subsequently dephosphorylated. Dephosphorylation is necessary for efficient recovery from the DNA damage checkpoint. In terms of processing, acetylated by ESA1 to form H2AK4ac and H2AK7ac.

Its subcellular location is the nucleus. It localises to the chromosome. Core component of nucleosome which plays a central role in DNA double strand break (DSB) repair. Nucleosomes wrap and compact DNA into chromatin, limiting DNA accessibility to the cellular machineries which require DNA as a template. Histones thereby play a central role in transcription regulation, DNA repair, DNA replication and chromosomal stability. DNA accessibility is regulated via a complex set of post-translational modifications of histones, also called histone code, and nucleosome remodeling. This is Histone H2A.1 (HTA1) from Candida albicans (strain SC5314 / ATCC MYA-2876) (Yeast).